We begin with the raw amino-acid sequence, 130 residues long: Phosphoribosyl-ATP pyrophosphatase (130 aa).

This sequence belongs to the PRA-PH family.

The protein localises to the cytoplasm. It carries out the reaction 1-(5-phospho-beta-D-ribosyl)-ATP + H2O = 1-(5-phospho-beta-D-ribosyl)-5'-AMP + diphosphate + H(+). It functions in the pathway amino-acid biosynthesis; L-histidine biosynthesis; L-histidine from 5-phospho-alpha-D-ribose 1-diphosphate: step 2/9. In Albidiferax ferrireducens (strain ATCC BAA-621 / DSM 15236 / T118) (Rhodoferax ferrireducens), this protein is Phosphoribosyl-ATP pyrophosphatase.